Here is a 127-residue protein sequence, read N- to C-terminus: Major sperm protein isoform beta (127 aa).

Position 2 is an N-acetylalanine (Ala-2). Residues 9-126 (DINTQPGSKI…RRKNLPIEYN (118 aa)) form the MSP domain.

As to quaternary structure, forms filaments 10 nm wide, with a characteristic substructure repeating axially at 9 nm. Sperm.

It is found in the cell projection. It localises to the pseudopodium. The protein resides in the cytoplasm. Its subcellular location is the cytoskeleton. In terms of biological role, central component in molecular interactions underlying sperm crawling. Forms an extensive filament system that extends from sperm villipoda, along the leading edge of the pseudopod. The sequence is that of Major sperm protein isoform beta from Ascaris suum (Pig roundworm).